A 212-amino-acid polypeptide reads, in one-letter code: uncharacterized protein (212 aa).

Residues Gly53, Glu74, and Asp97 each coordinate S-adenosyl-L-methionine.

Belongs to the methyltransferase superfamily. YrrT family.

Could be a S-adenosyl-L-methionine-dependent methyltransferase. This is an uncharacterized protein from Bacillus cereus (strain ATCC 14579 / DSM 31 / CCUG 7414 / JCM 2152 / NBRC 15305 / NCIMB 9373 / NCTC 2599 / NRRL B-3711).